A 1403-amino-acid polypeptide reads, in one-letter code: DNA-directed RNA polymerase subunit beta' (1403 aa).

Residues Cys70, Cys72, Cys85, and Cys88 each coordinate Zn(2+). Mg(2+) is bound by residues Asp461, Asp463, and Asp465. Residues 687 to 708 (QQISQEETTGDRDGKRETRKQP) are disordered. The segment covering 695 to 706 (TGDRDGKRETRK) has biased composition (basic and acidic residues). Zn(2+)-binding residues include Cys805, Cys879, Cys886, and Cys889. A disordered region spans residues 1381–1403 (THGDTGPLGEPSRPVGTQTTGAA).

Belongs to the RNA polymerase beta' chain family. In terms of assembly, the RNAP catalytic core consists of 2 alpha, 1 beta, 1 beta' and 1 omega subunit. When a sigma factor is associated with the core the holoenzyme is formed, which can initiate transcription. Mg(2+) is required as a cofactor. Requires Zn(2+) as cofactor.

The catalysed reaction is RNA(n) + a ribonucleoside 5'-triphosphate = RNA(n+1) + diphosphate. Its function is as follows. DNA-dependent RNA polymerase catalyzes the transcription of DNA into RNA using the four ribonucleoside triphosphates as substrates. This Myxococcus xanthus (strain DK1622) protein is DNA-directed RNA polymerase subunit beta'.